The following is a 499-amino-acid chain: UDP-N-acetylmuramoyl-L-alanyl-D-glutamate--2,6-diaminopimelate ligase (499 aa).

UDP-N-acetyl-alpha-D-muramoyl-L-alanyl-D-glutamate contacts are provided by L30 and S32. 122 to 128 (GTNGKTT) lines the ATP pocket. UDP-N-acetyl-alpha-D-muramoyl-L-alanyl-D-glutamate contacts are provided by residues 164-165 (TT), S191, Q197, and R199. K231 is modified (N6-carboxylysine). Residues R397, 421–424 (DNPR), G472, and E476 each bind meso-2,6-diaminopimelate. The Meso-diaminopimelate recognition motif motif lies at 421 to 424 (DNPR).

The protein belongs to the MurCDEF family. MurE subfamily. It depends on Mg(2+) as a cofactor. In terms of processing, carboxylation is probably crucial for Mg(2+) binding and, consequently, for the gamma-phosphate positioning of ATP.

The protein resides in the cytoplasm. The enzyme catalyses UDP-N-acetyl-alpha-D-muramoyl-L-alanyl-D-glutamate + meso-2,6-diaminopimelate + ATP = UDP-N-acetyl-alpha-D-muramoyl-L-alanyl-gamma-D-glutamyl-meso-2,6-diaminopimelate + ADP + phosphate + H(+). It participates in cell wall biogenesis; peptidoglycan biosynthesis. Functionally, catalyzes the addition of meso-diaminopimelic acid to the nucleotide precursor UDP-N-acetylmuramoyl-L-alanyl-D-glutamate (UMAG) in the biosynthesis of bacterial cell-wall peptidoglycan. This chain is UDP-N-acetylmuramoyl-L-alanyl-D-glutamate--2,6-diaminopimelate ligase, found in Blochmanniella floridana.